The chain runs to 224 residues: UPF0758 protein VP0184 (224 aa).

An MPN domain is found at 102–224 (ALTSPEQTKL…SVSFAERGWI (123 aa)). Residues His173, His175, and Asp186 each coordinate Zn(2+). The JAMM motif signature appears at 173–186 (HNHPSGVAEPSQAD).

The protein belongs to the UPF0758 family.

The chain is UPF0758 protein VP0184 from Vibrio parahaemolyticus serotype O3:K6 (strain RIMD 2210633).